Here is a 251-residue protein sequence, read N- to C-terminus: Probable transcriptional regulatory protein CT1665 (251 aa).

This sequence belongs to the TACO1 family.

The protein localises to the cytoplasm. The protein is Probable transcriptional regulatory protein CT1665 of Chlorobaculum tepidum (strain ATCC 49652 / DSM 12025 / NBRC 103806 / TLS) (Chlorobium tepidum).